A 101-amino-acid chain; its full sequence is Small ribosomal subunit protein uS10 (101 aa).

Belongs to the universal ribosomal protein uS10 family. In terms of assembly, part of the 30S ribosomal subunit.

Functionally, involved in the binding of tRNA to the ribosomes. The sequence is that of Small ribosomal subunit protein uS10 from Phocaeicola vulgatus (strain ATCC 8482 / DSM 1447 / JCM 5826 / CCUG 4940 / NBRC 14291 / NCTC 11154) (Bacteroides vulgatus).